The following is a 424-amino-acid chain: Otefin (424 aa).

In terms of domain architecture, LEM spans 1 to 30 (MADVDDFDSLSNAELRAKMLAQGLPNIPVT). Positions 1–50 (MADVDDFDSLSNAELRAKMLAQGLPNIPVTDSSRKVLVKRLRASIGGQAS) are required for binding to Med and germline stem cell maintenance. A disordered region spans residues 42 to 186 (RASIGGQASP…SSKRADREEN (145 aa)). Phosphoserine occurs at positions 44, 50, and 54. At threonine 63 the chain carries Phosphothreonine. Over residues 65 to 80 (APAPGAPSAPAAASTP) the composition is skewed to low complexity. Positions 92–99 (ATKARRTI) match the Nuclear localization signal motif. A compositionally biased stretch (basic and acidic residues) spans 103–133 (EAKEPVRRLPEEAIRRRPDEADRLRSEEPVA). Residue serine 152 is modified to Phosphoserine. A compositionally biased stretch (basic and acidic residues) spans 157-170 (SERKVVEPLRKPET). Serine 192 and serine 198 each carry phosphoserine. Residues 259–278 (PSVPSARAQTTSSTRSYDYA) form a disordered region. Residues 262–274 (PSARAQTTSSTRS) show a composition bias toward low complexity. The segment at 271–400 (STRSYDYASN…NRWLNSLEQK (130 aa)) is required for binding to Med. Position 321 is a phosphoserine (serine 321). The residue at position 324 (threonine 324) is a Phosphothreonine. Position 326 is a phosphoserine (serine 326). Position 358 is a phosphothreonine (threonine 358). 2 positions are modified to phosphoserine: serine 378 and serine 385. The tract at residues 400–424 (KYHIKSKLFIVLLVLLLIGVYYIFY) is essential for nuclear membrane localization and germline stem cell maintenance. Residues 406–424 (KLFIVLLVLLLIGVYYIFY) are essential for nuclear membrane localization.

Interacts with Med. Interacts with Lam. Interacts with aurA, alphaTub84B, gammaTub23C and gammaTub37C. Interacts with Nemp. In terms of processing, phosphorylation at Thr-63 by aurA may be required for exit from mitosis. May be phosphorylated by Cdk1 and Pka-C1. As to expression, expressed in all cell types of the germarium and testis. Expressed in nurse cells, follicle cells and oocytes.

It is found in the nucleus inner membrane. Its subcellular location is the nucleus. The protein resides in the nucleoplasm. It localises to the cytoplasm. The protein localises to the chromosome. It is found in the cytoskeleton. Its subcellular location is the spindle pole. The protein resides in the microtubule organizing center. It localises to the centrosome. Its function is as follows. Inner nuclear membrane protein. Involved in the attachment of membrane vesicles to chromatin during nuclear assembly, and is probably required for centrosome maturation and cell cycle progression during mitosis. Essential for differentiation of certain tissues and the maintenance of progenitor cell populations. Required for the differentiation and maintenance of male and female germline stem cells (GSCs), as well as the maintenance of somatic cells in the GSC niche. This role is likely to be independent of the BMP (Dpp) pathway that negatively regulates bam transcription during GSC differentiation. During development, plays essential and redundant functions with the other LEM domain proteins; bocks and MAN1. Also has a redundant but important role with bocks during larval development. This chain is Otefin, found in Drosophila melanogaster (Fruit fly).